Here is an 846-residue protein sequence, read N- to C-terminus: Interleukin cytokine receptor-related protein 1 (846 aa).

Residues 1-25 (MFLHSPALLIWLFLFCLAGPQAVRT) form the signal peptide. The Extracellular segment spans residues 26 to 418 (EPYNSTSSSS…KEDTTWTWHT (393 aa)). 6 N-linked (GlcNAc...) asparagine glycosylation sites follow: Asn-29, Asn-79, Asn-186, Asn-214, Asn-339, and Asn-395. Positions 388–409 (EKPPATSNQTEESDGKAEKDKK) are disordered. Positions 400-409 (SDGKAEKDKK) are enriched in basic and acidic residues. A helical membrane pass occupies residues 419-439 (YAITGGAIIAILFILSVCAGL). Topologically, residues 440–846 (KCYKKFNNKK…AFHDEVIGIH (407 aa)) are cytoplasmic. Positions 476–618 (SISVLIVYSH…IPNSLMTMTT (143 aa)) constitute an SEFIR domain. The segment at 737–771 (GPIHVEPTEPEVLEPAEEPMEEAEEDEEDEDDVDS) is disordered. Positions 744-771 (TEPEVLEPAEEPMEEAEEDEEDEDDVDS) are enriched in acidic residues.

In terms of assembly, component of a heterodimeric receptor complex composed of ilcr-1 and ilcr-2. The receptor complex interacts with actl-1 and ilc-17.1 with the interaction being mediated by ilcr-2. As to expression, expressed in most neurons.

Its subcellular location is the cell membrane. Its function is as follows. Forms a receptor complex together with receptor ilcr-2, which upon activation acts as a modulator of neuronal activity. Binding of the ligand ilc-17.1 to the ilcr-1/2 receptor complex triggers a signaling cascade that activates the downstream signaling components actl-1, pik-1 and nfki-1, and results in increased neuronal activity in RMG interneurons in response to input from oxygen-sensing neurons. This leads to increased animal movement and promotes aggregation behavior. In Caenorhabditis elegans, this protein is Interleukin cytokine receptor-related protein 1.